We begin with the raw amino-acid sequence, 806 residues long: Transitional endoplasmic reticulum ATPase (806 aa).

A2 carries the post-translational modification N-acetylalanine. 2 positions are modified to phosphoserine: S3 and S7. K8 is covalently cross-linked (Glycyl lysine isopeptide (Lys-Gly) (interchain with G-Cter in SUMO2)). Phosphoserine is present on S13. A Glycyl lysine isopeptide (Lys-Gly) (interchain with G-Cter in SUMO2) cross-link involves residue K18. S37 bears the Phosphoserine mark. 247 to 253 contributes to the ATP binding site; it reads PGTGKTL. K315 is subject to N6,N6,N6-trimethyllysine; by VCPKMT. The ATP site is built by N348 and H384. T436 carries the phosphothreonine modification. Position 462 is a phosphoserine (S462). K502 and K505 each carry N6-acetyllysine. 521–526 is a binding site for ATP; it reads GCGKTL. K668 carries the N6-acetyllysine; alternate modification. K668 carries the N6-succinyllysine; alternate modification. S702 is modified (phosphoserine). The disordered stretch occupies residues 708-727; that stretch reads RRERERQTNPSAMEVEEDDP. The residue at position 754 (K754) is an N6-acetyllysine. The disordered stretch occupies residues 768–806; sequence FGSFRFPSGNQGGAGPSQGSGGGTGGSVYTEDNDDDLYG. Phosphoserine is present on residues S770, S775, and S787. The span at 777–793 shows a compositional bias: gly residues; that stretch reads NQGGAGPSQGSGGGTGG. The interaction with UBXN6 stretch occupies residues 797–806; it reads TEDNDDDLYG. Y805 bears the Phosphotyrosine mark.

The protein belongs to the AAA ATPase family. As to quaternary structure, homohexamer. Forms a ring-shaped particle of 12.5 nm diameter, that displays 6-fold radial symmetry. Part of a ternary complex containing STX5A, NSFL1C and VCP. NSFL1C forms a homotrimer that binds to one end of a VCP homohexamer. The complex binds to membranes enriched in phosphatidylethanolamine-containing lipids and promotes Golgi membrane fusion. Binds to a heterodimer of NPLOC4 and UFD1, binding to this heterodimer inhibits Golgi-membrane fusion. Interaction with VCIP135 leads to dissociation of the complex via ATP hydrolysis by VCP. Part of a ternary complex containing NPLOC4, UFD1 and VCP. Interacts with NSFL1C-like protein p37; the complex has membrane fusion activity and is required for Golgi and endoplasmic reticulum biogenesis. Interacts with SELENOS and SYVN1, as well as with DERL1 (via SHP-box motif), DERL2 and DERL3; which probably transfer misfolded proteins from the ER to VCP. Interacts with SVIP and DERL1. Component of a complex required to couple retrotranslocation, ubiquitination and deglycosylation composed of NGLY1, SAKS1, AMFR, VCP and RAD23B. Part of a complex composed of STUB1/CHIP, VCP/p97, CHRNA3, and UBXN2A that modulates the ubiquitination and endoplasmic reticulum-associated degradation (ERAD) of CHRNA3. Within the complex UBXN2A acts as a scaffold protein required for the interaction of CHRNA3 with VCP/p97, this interaction also inhibits CHRNA3 ubiquitination by STUB1/CHIP and subsequently ERAD. Interacts with UBXN2A (via UBX domain); the interaction is required for the interaction of CHRNA3 in the STUB1-VCP-UBXN2A complex. Directly interacts with UBXN4 and RNF19A. Interacts with CASR. Interacts with UBE4B and YOD1. Interacts with clathrin. Interacts with RNF103. Interacts with TRIM13 and TRIM21. Component of a VCP/p97-AMFR/gp78 complex that participates in the final step of the endoplasmic reticulum-associated degradation (ERAD) of HMGCR. Interacts directly with AMFR/gp78 (via its VIM). Interacts with RHBDD1 (via C-terminal domain). Interacts with SPRTN; leading to recruitment to stalled replication forks. Interacts with WASHC5. Interacts with UBOX5. Interacts (via N-terminus) with UBXN7, UBXN8, and probably several other UBX domain-containing proteins (via UBX domains); the interactions are mutually exclusive with VIM-dependent interactions such as those with AMFR and SELENOS. Forms a complex with UBQLN1 and UBXN4. Interacts (via the PIM motif) with RNF31 (via the PUB domain). Interacts with RIGI and RNF125; interaction takes place when RIGI is ubiquitinated via 'Lys-63'-linked ubiquitin on its CARD domains, leading to recruit RNF125 and promote ubiquitination and degradation of RIGI. Interacts with BAG6. Interacts with UBXN10. Interacts with UBXN6; the interaction with UBXN6 is direct and competitive with UFD1. Forms a ternary complex with CAV1 and UBXN6. Interacts with PLAA, UBXN6 and YOD1; may form a complex involved in macroautophagy. Interacts with ANKZF1. Interacts with ubiquitin-binding protein FAF1. Interacts with ZFAND2B (via VIM motif); the interaction is direct. Interacts with ZFAND1 (via its ubiquitin-like region); this interaction occurs in an arsenite-dependent manner. Interacts with CCDC47. Interacts with LMBR1L and UBAC2. Interacts with ATXN3. Interacts with TEX264; bridging VCP to covalent DNA-protein cross-links (DPCs). Mg(2+) is required as a cofactor. Post-translationally, ISGylated. Methylation at Lys-315 catalyzed by VCPKMT is increased in the presence of ASPSCR1. Lys-315 methylation may decrease ATPase activity. In terms of processing, phosphorylated by tyrosine kinases in response to T-cell antigen receptor activation. Phosphorylated in mitotic cells.

Its subcellular location is the cytoplasm. It localises to the cytosol. The protein localises to the endoplasmic reticulum. It is found in the nucleus. The protein resides in the stress granule. It carries out the reaction ATP + H2O = ADP + phosphate + H(+). In terms of biological role, necessary for the fragmentation of Golgi stacks during mitosis and for their reassembly after mitosis. Involved in the formation of the transitional endoplasmic reticulum (tER). The transfer of membranes from the endoplasmic reticulum to the Golgi apparatus occurs via 50-70 nm transition vesicles which derive from part-rough, part-smooth transitional elements of the endoplasmic reticulum (tER). Vesicle budding from the tER is an ATP-dependent process. The ternary complex containing UFD1, VCP and NPLOC4 binds ubiquitinated proteins and is necessary for the export of misfolded proteins from the ER to the cytoplasm, where they are degraded by the proteasome. The NPLOC4-UFD1-VCP complex regulates spindle disassembly at the end of mitosis and is necessary for the formation of a closed nuclear envelope. Regulates E3 ubiquitin-protein ligase activity of RNF19A. Component of the VCP/p97-AMFR/gp78 complex that participates in the final step of the sterol-mediated ubiquitination and endoplasmic reticulum-associated degradation (ERAD) of HMGCR. Mediates the endoplasmic reticulum-associated degradation of CHRNA3 in cortical neurons as part of the STUB1-VCP-UBXN2A complex. Involved in endoplasmic reticulum stress-induced pre-emptive quality control, a mechanism that selectively attenuates the translocation of newly synthesized proteins into the endoplasmic reticulum and reroutes them to the cytosol for proteasomal degradation. Involved in clearance process by mediating G3BP1 extraction from stress granules. Also involved in DNA damage response: recruited to double-strand breaks (DSBs) sites in a RNF8- and RNF168-dependent manner and promotes the recruitment of TP53BP1 at DNA damage sites. Recruited to stalled replication forks by SPRTN: may act by mediating extraction of DNA polymerase eta (POLH) to prevent excessive translesion DNA synthesis and limit the incidence of mutations induced by DNA damage. Together with SPRTN metalloprotease, involved in the repair of covalent DNA-protein cross-links (DPCs) during DNA synthesis. Involved in interstrand cross-link repair in response to replication stress by mediating unloading of the ubiquitinated CMG helicase complex. Mediates extraction of PARP1 trapped to chromatin: recognizes and binds ubiquitinated PARP1 and promotes its removal. Required for cytoplasmic retrotranslocation of stressed/damaged mitochondrial outer-membrane proteins and their subsequent proteasomal degradation. Essential for the maturation of ubiquitin-containing autophagosomes and the clearance of ubiquitinated protein by autophagy. Acts as a negative regulator of type I interferon production by interacting with RIGI: interaction takes place when RIGI is ubiquitinated via 'Lys-63'-linked ubiquitin on its CARD domains, leading to recruit RNF125 and promote ubiquitination and degradation of RIGI. May play a role in the ubiquitin-dependent sorting of membrane proteins to lysosomes where they undergo degradation. May more particularly play a role in caveolins sorting in cells. By controlling the steady-state expression of the IGF1R receptor, indirectly regulates the insulin-like growth factor receptor signaling pathway. The protein is Transitional endoplasmic reticulum ATPase (VCP) of Sus scrofa (Pig).